The chain runs to 438 residues: UDP-N-acetylmuramoylalanine--D-glutamate ligase (438 aa).

115 to 121 (GSNGKST) contributes to the ATP binding site.

It belongs to the MurCDEF family.

Its subcellular location is the cytoplasm. The catalysed reaction is UDP-N-acetyl-alpha-D-muramoyl-L-alanine + D-glutamate + ATP = UDP-N-acetyl-alpha-D-muramoyl-L-alanyl-D-glutamate + ADP + phosphate + H(+). Its pathway is cell wall biogenesis; peptidoglycan biosynthesis. Cell wall formation. Catalyzes the addition of glutamate to the nucleotide precursor UDP-N-acetylmuramoyl-L-alanine (UMA). In Vibrio atlanticus (strain LGP32) (Vibrio splendidus (strain Mel32)), this protein is UDP-N-acetylmuramoylalanine--D-glutamate ligase.